The sequence spans 138 residues: uncharacterized protein (138 aa).

This is an uncharacterized protein from Bacillus subtilis (strain 168).